Consider the following 60-residue polypeptide: MAVQQNKKSPSKRGMHRSHNALNTPGTAIEPTTGEVHLRHHISPTGFYRGRKVLKTKADA.

Residues 1–46 (MAVQQNKKSPSKRGMHRSHNALNTPGTAIEPTTGEVHLRHHISPTG) are disordered. Residues 9–19 (SPSKRGMHRSH) show a composition bias toward basic residues.

It belongs to the bacterial ribosomal protein bL32 family.

The sequence is that of Large ribosomal subunit protein bL32 from Leptothrix cholodnii (strain ATCC 51168 / LMG 8142 / SP-6) (Leptothrix discophora (strain SP-6)).